We begin with the raw amino-acid sequence, 137 residues long: 1,4-dihydroxy-2-naphthoyl-CoA hydrolase (137 aa).

Residue D12 is part of the active site.

Belongs to the 4-hydroxybenzoyl-CoA thioesterase family. DHNA-CoA hydrolase subfamily.

The enzyme catalyses 1,4-dihydroxy-2-naphthoyl-CoA + H2O = 1,4-dihydroxy-2-naphthoate + CoA + H(+). Its pathway is cofactor biosynthesis; phylloquinone biosynthesis. It participates in quinol/quinone metabolism; 1,4-dihydroxy-2-naphthoate biosynthesis; 1,4-dihydroxy-2-naphthoate from chorismate: step 7/7. Functionally, catalyzes the hydrolysis of 1,4-dihydroxy-2-naphthoyl-CoA (DHNA-CoA) to 1,4-dihydroxy-2-naphthoate (DHNA), a reaction involved in phylloquinone (vitamin K1) biosynthesis. This chain is 1,4-dihydroxy-2-naphthoyl-CoA hydrolase, found in Acaryochloris marina (strain MBIC 11017).